The primary structure comprises 527 residues: Mitogen-activated protein kinase kinae MKK2 (527 aa).

2 disordered regions span residues 1–143 (MHDQ…SAGS) and 156–189 (IGST…DKDG). The segment covering 107 to 129 (QQGQSASGGSESSAAHSRSGSFG) has biased composition (low complexity). A compositionally biased stretch (polar residues) spans 134–143 (RTSNPTSAGS). The span at 177 to 189 (ERSDGGAGMDKDG) shows a compositional bias: basic and acidic residues. The Protein kinase domain occupies 227–497 (IVELGGLGEG…PWRMLEHPWM (271 aa)). ATP contacts are provided by residues 233–241 (LGEGAGGAV) and Lys-256.

It belongs to the protein kinase superfamily. STE Ser/Thr protein kinase family. MAP kinase kinase subfamily. Interacts with the adapter protein MST50.

It catalyses the reaction L-seryl-[protein] + ATP = O-phospho-L-seryl-[protein] + ADP + H(+). The enzyme catalyses L-threonyl-[protein] + ATP = O-phospho-L-threonyl-[protein] + ADP + H(+). In terms of biological role, mitogen-activated protein kinase kinase; part of the MCK1-MKK2-MPS1 MAP kinase (MAPK) signal transduction cascade that is essential for appressorium formation, penetration and invasive growth. Beside its role in pathogenesis, the MPS1 cascade is active in conidiation and cellular stress responses. Targets downstream of the the MPS1-MAPK pathway include transcription factors MIG1 and SWI6, as well as GSK1 and MPG1. The protein is Mitogen-activated protein kinase kinae MKK2 of Pyricularia oryzae (strain 70-15 / ATCC MYA-4617 / FGSC 8958) (Rice blast fungus).